Here is a 1133-residue protein sequence, read N- to C-terminus: MRVSSIEAEMENPIDVDKTDVEGELKIKQVTLLRENIVKKIVFFLVAIFCSDRPSVLKKVFYEEVSKQEEATHVYVLASDLTDYIEEASLKENPEEGGEKSIYFVNRLQKYIYHKKQNKFRAIEYFIQGKSYSEIANNKPLATGRVDQLLAYYGKSEIEINVPSFLTLMWREFKKPINFLLYFGIIVWGIEQMYVSTAITVVFTTTINSLICIYIRGVMQKLKDACLNNTSVIVQRHNGQGYQEITVASNMIAPGDIVLFKREVTLPFDCVILEGSCQVTEANITGENVAIGKCQIPTDHHNDIFKYESSKSHTLFQGTQLMKIEDDILKVIVVRTGFGSYKGQIIRALLYPKPFNKKFQQQAVKLTILMATLLLIGFLSTLSRLLDIELPPLFIAFRFLDILIYSAPPGMPMLIAITNFVGLKRLKNNQILGQDPNSASQAGRIQTLCFDKTGTLTEDKVDLIGYQLKGQNQTFDKIQCQDPNNISIEHKLFSICHEVTKINNKLLGDLMDVKMAEFSTLDIDYDHEAKQHYSKSGNKRFYCIQVNQFHSEYQSMSVVCKEVDMITKEFKHYFFIKGSPEKIQSLSHVQSSEKAQLSTLINEGYRILGFGYKEIPQSEIDAFLDLSREQQEANVQSLGFLIYKNNLKPDTQEVIKEFKEACYNIKVISGDNPITTLKISQELEIVNRKNPTVIINFEETENVKSHLIITEIQPDNSTQVIDFSSAQNEQDYINKQMSYCCDAFLNNKSFCFSGKAHYYFQLKAKTDHISFKPEWVKMQDKSVQKIISFYQMLIINTNVFARTQPEQKQTIVRLLKESDQIVCMVGDGANDCSAIREADVGISFAEADGQFSSSYVSLSTSLSCVKRVLLEGRVNLSNSVEIFKGYLQVALLRYLGFLTLAYFYSSYSSGQMDWQALASGYFLVYLILGCNTPLKKLEKSVFDDNLFSIYNVTSVLFGFTLHILSIVGCVESLHASPIYKEVNSLDAENNFQFETQHNTVLNFNILINFFYVIISNHIGKPMKDRYYKNTIAIYYDLGLIYTCKCMILQVLLILEHTHHGLIFLILLLDQEFSSSLTVQVYFSLPMNLFLPEEFSLNFTQEVKKEKELLICNSSSTILEVDYNLRLNYFQQNF.

The Cytoplasmic segment spans residues 1 to 6; that stretch reads MRVSSI. The chain crosses the membrane as a helical span at residues 7 to 28; that stretch reads EAEMENPIDVDKTDVEGELKIK. The Extracellular segment spans residues 29–34; sequence QVTLLR. Residues 35-53 traverse the membrane as a helical segment; the sequence is ENIVKKIVFFLVAIFCSDR. At 54-167 the chain is on the cytoplasmic side; that stretch reads PSVLKKVFYE…IEINVPSFLT (114 aa). Residues 168 to 190 form a helical membrane-spanning segment; sequence LMWREFKKPINFLLYFGIIVWGI. The Extracellular portion of the chain corresponds to 191 to 193; that stretch reads EQM. A helical membrane pass occupies residues 194 to 212; that stretch reads YVSTAITVVFTTTINSLIC. Residues 213–363 lie on the Cytoplasmic side of the membrane; it reads IYIRGVMQKL…PFNKKFQQQA (151 aa). A helical membrane pass occupies residues 364–383; sequence VKLTILMATLLLIGFLSTLS. The Extracellular portion of the chain corresponds to 384–396; sequence RLLDIELPPLFIA. The helical transmembrane segment at 397–418 threads the bilayer; sequence FRFLDILIYSAPPGMPMLIAIT. Topologically, residues 419-887 are cytoplasmic; sequence NFVGLKRLKN…NSVEIFKGYL (469 aa). Aspartate 451 functions as the 4-aspartylphosphate intermediate in the catalytic mechanism. Positions 827 and 831 each coordinate Mg(2+). Residues 888–906 traverse the membrane as a helical segment; the sequence is QVALLRYLGFLTLAYFYSS. At 907 to 915 the chain is on the extracellular side; the sequence is YSSGQMDWQ. A helical membrane pass occupies residues 916–931; it reads ALASGYFLVYLILGCN. Over 932-948 the chain is Cytoplasmic; it reads TPLKKLEKSVFDDNLFS. Residues 949–972 traverse the membrane as a helical segment; sequence IYNVTSVLFGFTLHILSIVGCVES. Residues 973-994 lie on the Extracellular side of the membrane; the sequence is LHASPIYKEVNSLDAENNFQFE. Residues 995–1018 traverse the membrane as a helical segment; that stretch reads TQHNTVLNFNILINFFYVIISNHI. Residues 1019–1030 are Cytoplasmic-facing; sequence GKPMKDRYYKNT. The helical transmembrane segment at 1031-1050 threads the bilayer; the sequence is IAIYYDLGLIYTCKCMILQV. The Extracellular portion of the chain corresponds to 1051–1101; sequence LLILEHTHHGLIFLILLLDQEFSSSLTVQVYFSLPMNLFLPEEFSLNFTQE. The helical transmembrane segment at 1102 to 1124 threads the bilayer; sequence VKKEKELLICNSSSTILEVDYNL. The Cytoplasmic portion of the chain corresponds to 1125–1133; that stretch reads RLNYFQQNF.

The protein belongs to the cation transport ATPase (P-type) (TC 3.A.3) family. Type V subfamily.

Its subcellular location is the membrane. The enzyme catalyses ATP + H2O = ADP + phosphate + H(+). This chain is Probable cation-transporting ATPase 9 (TPA9), found in Tetrahymena thermophila.